We begin with the raw amino-acid sequence, 304 residues long: Voltage-dependent anion channel-forming protein YneE (304 aa).

The next 4 membrane-spanning stretches (helical) occupy residues 28-48 (LLLN…YTML), 50-70 (IKFT…FLGF), 209-229 (AYTL…PFAL), and 235-255 (YMTP…DALA).

Belongs to the anion channel-forming bestrophin (TC 1.A.46) family.

Its subcellular location is the cell membrane. The chain is Voltage-dependent anion channel-forming protein YneE (yneE) from Salmonella typhi.